The chain runs to 343 residues: Anthranilate phosphoribosyltransferase (343 aa).

Residues G84, 87–88 (GD), T92, 94–97 (NIST), 112–120 (KHGNRSVSS), and S124 each bind 5-phospho-alpha-D-ribose 1-diphosphate. G84 is an anthranilate binding site. Position 96 (S96) interacts with Mg(2+). N115 serves as a coordination point for anthranilate. Residue R170 participates in anthranilate binding. Residues D229 and E230 each coordinate Mg(2+).

This sequence belongs to the anthranilate phosphoribosyltransferase family. As to quaternary structure, homodimer. Mg(2+) serves as cofactor.

The enzyme catalyses N-(5-phospho-beta-D-ribosyl)anthranilate + diphosphate = 5-phospho-alpha-D-ribose 1-diphosphate + anthranilate. It functions in the pathway amino-acid biosynthesis; L-tryptophan biosynthesis; L-tryptophan from chorismate: step 2/5. Catalyzes the transfer of the phosphoribosyl group of 5-phosphorylribose-1-pyrophosphate (PRPP) to anthranilate to yield N-(5'-phosphoribosyl)-anthranilate (PRA). This Stenotrophomonas maltophilia (strain K279a) protein is Anthranilate phosphoribosyltransferase.